The following is a 385-amino-acid chain: Putative actin-25 (385 aa).

The protein belongs to the actin family.

The protein resides in the cytoplasm. Its subcellular location is the cytoskeleton. It carries out the reaction ATP + H2O = ADP + phosphate + H(+). In terms of biological role, actins are highly conserved proteins that are involved in various types of cell motility and are ubiquitously expressed in all eukaryotic cells. Multiple isoforms are involved in various cellular functions such as cytoskeleton structure, cell mobility, chromosome movement and muscle contraction. This chain is Putative actin-25 (act25), found in Dictyostelium discoideum (Social amoeba).